The primary structure comprises 570 residues: Spastin (570 aa).

At 1-35 the chain is on the cytoplasmic side; the sequence is MNSGHKARLRGGRACGPVSDGSARGNRLLFYTRSL. An intramembrane region (helical) is located at residues 36–52; the sequence is SRVPEWLLRVLLLLLRW. Over 53-570 the chain is Cytoplasmic; it reads LFQPIRRAMA…NREYGDTTGV (518 aa). An MIT domain is found at 83 to 158; it reads YHKQAFEFIS…SMAEDRLKLL (76 aa). A disordered region spans residues 186–269; sequence APASGAVSKK…SPQRKRDMKN (84 aa). Composition is skewed to polar residues over residues 199 to 208, 216 to 242, and 251 to 261; these read LTITNQTSLR, TPNA…NQKG, and VKASTTATASP. Residue 335 to 342 participates in ATP binding; the sequence is GPPGNGKT.

It belongs to the AAA ATPase family. Spastin subfamily. In terms of assembly, homohexamer. The homohexamer is stabilized by ATP-binding. The homohexamer may adopt a ring conformation through which microtubules pass prior to being severed. Interacts with microtubules.

The protein resides in the membrane. The protein localises to the cytoplasm. It is found in the cytoskeleton. It localises to the microtubule organizing center. Its subcellular location is the centrosome. The protein resides in the perinuclear region. The protein localises to the nucleus. It catalyses the reaction n ATP + n H2O + a microtubule = n ADP + n phosphate + (n+1) alpha/beta tubulin heterodimers.. ATP-dependent microtubule severing protein that specifically recognizes and cuts microtubules that are polyglutamylated. Preferentially recognizes and acts on microtubules decorated with short polyglutamate tails: severing activity increases as the number of glutamates per tubulin rises from one to eight, but decreases beyond this glutamylation threshold. Microtubule severing promotes reorganization of cellular microtubule arrays and the release of microtubules from the centrosome following nucleation. Required for membrane traffic from the endoplasmic reticulum (ER) to the Golgi and for completion of the abscission stage of cytokinesis. Also plays a role in axon growth and the formation of axonal branches. The sequence is that of Spastin from Danio rerio (Zebrafish).